The primary structure comprises 153 residues: Natriuretic peptides A (153 aa).

A signal peptide spans M1–A25. 2 consecutive propeptides follow at residues N26–R123 and D93–D103. A disordered region spans residues E54–S105. A Phosphoserine modification is found at S129. Residues C130 and C146 are joined by a disulfide bond. Positions N147–Y151 are important for degradation of atrial natriuretic peptide by IDE.

Belongs to the natriuretic peptide family. In terms of assembly, homodimer; disulfide-linked antiparallel dimer. The precursor molecule is proteolytically cleaved by CORIN at Arg-123 to produce the atrial natriuretic peptide. Undergoes further proteolytic cleavage by unknown proteases to give rise to long-acting natriuretic peptide, vessel dilator and kaliuretic peptide. Additional processing gives rise to the auriculin and atriopeptin peptides. In the kidneys, alternative processing by an unknown protease results in the peptide urodilatin. In terms of processing, cleavage by MME initiates degradation of the factor and thereby regulates its activity. Degradation by IDE results in reduced activation of NPR1 (in vitro). During IDE degradation, the resulting products can temporarily stimulate NPR2 to produce cGMP, before the fragments are completely degraded and inactivated by IDE (in vitro). Post-translationally, degraded by IDE. Phosphorylation on Ser-129 decreases vasorelaxant activity.

Its subcellular location is the secreted. The protein resides in the perikaryon. It is found in the cell projection. In terms of biological role, hormone that plays a key role in mediating cardio-renal homeostasis, and is involved in vascular remodeling and regulating energy metabolism. Acts by specifically binding and stimulating NPR1 to produce cGMP, which in turn activates effector proteins, such as PRKG1, that drive various biological responses. Regulates vasodilation, natriuresis, diuresis and aldosterone synthesis and is therefore essential for regulating blood pressure, controlling the extracellular fluid volume and maintaining the fluid-electrolyte balance. Also involved in inhibiting cardiac remodeling and cardiac hypertrophy by inducing cardiomyocyte apoptosis and attenuating the growth of cardiomyocytes and fibroblasts. Plays a role in female pregnancy by promoting trophoblast invasion and spiral artery remodeling in uterus, and thus prevents pregnancy-induced hypertension. In adipose tissue, acts in various cGMP- and PKG-dependent pathways to regulate lipid metabolism and energy homeostasis. This includes up-regulating lipid metabolism and mitochondrial oxygen utilization by activating the AMP-activated protein kinase (AMPK), and increasing energy expenditure by acting via MAPK11 to promote the UCP1-dependent thermogenesis of brown adipose tissue. Binds the clearance receptor NPR3 which removes the hormone from circulation. May have a role in cardio-renal homeostasis through regulation of natriuresis, diuresis, vasodilation, and inhibiting aldosterone synthesis. In vitro, promotes the production of cGMP and induces vasodilation. May promote natriuresis, at least in part, by enhancing prostaglandin E2 synthesis resulting in the inhibition of renal Na+-K+-ATPase. However reports on the involvement of this peptide in mammal blood volume and blood pressure homeostasis are conflicting; according to a report, in vivo it is not sufficient to activate cGMP and does not inhibit collecting duct transport nor effect diuresis and natriuresis. Appears to bind to specific receptors that are distinct from the receptors bound by atrial natriuretic peptide and vessel dilator. Possibly enhances protein excretion in urine by decreasing proximal tubular protein reabsorption. Its function is as follows. May have a role in cardio-renal homeostasis through regulation of natriuresis, diuresis, and vasodilation. In vitro, promotes the production of cGMP and induces vasodilation. May promote natriuresis, at least in part, by enhancing prostaglandin E2 synthesis resulting in the inhibition of renal Na+-K+-ATPase. However reports on the involvement of this peptide in mammal blood volume and blood pressure homeostasis are conflicting; according to a report it is not sufficient to activate cGMP and does not inhibit collecting duct transport nor effect diuresis and natriuresis. Appears to bind to specific receptors that are distinct from the receptors bound by the atrial natriuretic and long-acting natriuretic peptides. Possibly functions in protein excretion in urine by maintaining the integrity of the proximal tubules and enhancing protein excretion by decreasing proximal tubular protein reabsorption. Functionally, may have a role in cardio-renal homeostasis through regulation of diuresis and inhibiting aldosterone synthesis. In vitro, promotes the production of cGMP and induces vasodilation. May promote natriuresis, at least in part, by enhancing prostaglandin E2 synthesis resulting in the inhibition of renal Na+-K+-ATPase. May have a role in potassium excretion but not sodium excretion (natriuresis). Possibly enhances protein excretion in urine by decreasing proximal tubular protein reabsorption. In terms of biological role, hormone produced in the kidneys that appears to be important for maintaining cardio-renal homeostasis. Mediates vasodilation, natriuresis and diuresis primarily in the renal system, in order to maintain the extracellular fluid volume and control the fluid-electrolyte balance. Specifically binds and stimulates cGMP production by renal transmembrane receptors, likely NPR1. Urodilatin not ANP, may be the natriuretic peptide responsible for the regulation of sodium and water homeostasis in the kidney. May have a role in cardio-renal homeostasis through regulation of natriuresis and vasodilation. In vivo promotes natriuresis and in vitro, vasodilates renal artery strips. Its function is as follows. May have a role in cardio-renal homeostasis through regulation of regulation of natriuresis and vasodilation. In vivo promotes natriuresis. In vitro, vasodilates intestinal smooth muscle but not smooth muscle strips. Functionally, may have a role in cardio-renal homeostasis through regulation of natriuresis and vasodilation. In vivo promotes natriuresis. In vitro, selectively vasodilates intestinal and vascular smooth muscle strips. In terms of biological role, may have a role in cardio-renal homeostasis through regulation of natriuresis and vasodilation. In vivo promotes natriuresis. In vitro, selectively vasodilates intestinal smooth muscle but not vascular smooth muscle strips. The chain is Natriuretic peptides A (NPPA) from Equus caballus (Horse).